Consider the following 141-residue polypeptide: MAVQRTFSIIKPDAVAKNVIGKIVSRFEEAGLRVVASKMKQLSKAEAEGFYAEHSERGFFGELVAFMTSGPVVVQVLEGENAIVRNRELMGATNPKEAAAGTIRADFAESIDANAVHGSDSEAAAAREIAYFFAATEVTAR.

6 residues coordinate ATP: Lys-11, Phe-59, Arg-87, Thr-93, Arg-104, and Asn-114. His-117 (pros-phosphohistidine intermediate) is an active-site residue.

Belongs to the NDK family. Homotetramer. Mg(2+) serves as cofactor.

It localises to the cytoplasm. It carries out the reaction a 2'-deoxyribonucleoside 5'-diphosphate + ATP = a 2'-deoxyribonucleoside 5'-triphosphate + ADP. The enzyme catalyses a ribonucleoside 5'-diphosphate + ATP = a ribonucleoside 5'-triphosphate + ADP. Its function is as follows. Major role in the synthesis of nucleoside triphosphates other than ATP. The ATP gamma phosphate is transferred to the NDP beta phosphate via a ping-pong mechanism, using a phosphorylated active-site intermediate. The protein is Nucleoside diphosphate kinase of Pseudomonas fluorescens (strain ATCC BAA-477 / NRRL B-23932 / Pf-5).